We begin with the raw amino-acid sequence, 332 residues long: 5,10-methylenetetrahydromethanopterin reductase (332 aa).

Belongs to the mer family.

Its subcellular location is the cytoplasm. It catalyses the reaction 5-methyl-5,6,7,8-tetrahydromethanopterin + oxidized coenzyme F420-(gamma-L-Glu)(n) + H(+) = 5,10-methylenetetrahydromethanopterin + reduced coenzyme F420-(gamma-L-Glu)(n). It functions in the pathway metabolic intermediate metabolism; lactate oxidation. Its function is as follows. Catalyzes the oxidation of methyl-H(4)MPT to methylene-H(4)MPT. The chain is 5,10-methylenetetrahydromethanopterin reductase from Archaeoglobus fulgidus (strain ATCC 49558 / DSM 4304 / JCM 9628 / NBRC 100126 / VC-16).